The following is a 508-amino-acid chain: Kinesin light chain (508 aa).

Positions Ile-34–Val-129 form a coiled coil. Residues Asp-156 to Asn-175 are disordered. Position 168 is a phosphothreonine (Thr-168). TPR repeat units lie at residues Leu-186 to Thr-219, Ala-228 to Thr-261, Ala-270 to Val-303, Ala-312 to Lys-345, Ala-354 to Arg-387, and Thr-437 to Ala-470. Thr-477 carries the post-translational modification Phosphothreonine. Phosphoserine occurs at positions 480 and 485. Positions Thr-484–Pro-508 are disordered. Residues Ala-493–Pro-508 are compositionally biased toward basic and acidic residues.

The protein belongs to the kinesin light chain family. In terms of assembly, oligomeric complex composed of two heavy chains and two light chains. In terms of tissue distribution, ubiquitous.

It localises to the cytoplasm. The protein resides in the cytoskeleton. In terms of biological role, kinesin is a microtubule-associated force-producing protein that may play a role in organelle transport. The light chain may function in coupling of cargo to the heavy chain or in the modulation of its ATPase activity. This Drosophila melanogaster (Fruit fly) protein is Kinesin light chain (Klc).